Reading from the N-terminus, the 388-residue chain is Trichodiene synthase (388 aa).

Residues D109, E173, N234, S238, E242, and D248 each coordinate Mg(2+). Residues 109–113 form an aspartate-rich domain region; it reads DDSRE.

Belongs to the trichodiene synthase family. The cofactor is Mg(2+). Mn(2+) serves as cofactor.

The enzyme catalyses (2E,6E)-farnesyl diphosphate = trichodiene + diphosphate. It participates in sesquiterpene biosynthesis; trichothecene biosynthesis. Trichodiene synthase; part of the gene cluster that mediates the production of the antimicrobial trichothecene harzianum A (HA) that plays a role in Botrytis cinerea antagonistic activity and plant defense priming. The biosynthesis of harzianum A begins with the cyclization of farnesyl diphosphate to trichodiene and is catalyzed by the trichodiene synthase TRI5. Trichodiene undergoes a series of oxygenations catalyzed by the cytochrome P450 monooxygenase TRI4. TRI4 controls the addition of 3 oxygens at C-2, C-11, and the C-12, C-13-epoxide to form the intermediate isotrichodiol. Isotrichodiol then undergoes a non-enzymatic isomerization and cyclization to form 12,13-epoxytrichothec-9-ene (EPT) which is further converted to trichodermol by the cytochrome P450 monooxygenase TRI11 via C-4 hydroxylation. The last step of HA synthesis is esterification of an octatriendioyl moiety to the C-4 oxygen of trichodermol. The octatriendioyl moiety is probably produced by the polyketide synthase TRI17 and the esterification performed by the trichothecene O-acetyltransferase TRI3. This chain is Trichodiene synthase, found in Trichoderma arundinaceum.